The primary structure comprises 585 residues: Glutamine--tRNA ligase (585 aa).

The 'HIGH' region motif lies at 51–61 (PEPNGYLHIGH). ATP is bound by residues 52–54 (EPN) and 58–64 (HIGHAKS). Residues Asp-84 and Tyr-238 each coordinate L-glutamine. ATP-binding positions include Thr-257 and 292–293 (RL). The short motif at 299–303 (ITSKR) is the 'KMSKS' region element.

Belongs to the class-I aminoacyl-tRNA synthetase family. In terms of assembly, monomer.

The protein resides in the cytoplasm. The enzyme catalyses tRNA(Gln) + L-glutamine + ATP = L-glutaminyl-tRNA(Gln) + AMP + diphosphate. The chain is Glutamine--tRNA ligase from Cupriavidus necator (strain ATCC 17699 / DSM 428 / KCTC 22496 / NCIMB 10442 / H16 / Stanier 337) (Ralstonia eutropha).